We begin with the raw amino-acid sequence, 194 residues long: ATP-dependent Clp protease proteolytic subunit (194 aa).

Ser98 acts as the Nucleophile in catalysis. His123 is a catalytic residue.

This sequence belongs to the peptidase S14 family. Fourteen ClpP subunits assemble into 2 heptameric rings which stack back to back to give a disk-like structure with a central cavity, resembling the structure of eukaryotic proteasomes.

The protein localises to the cytoplasm. The catalysed reaction is Hydrolysis of proteins to small peptides in the presence of ATP and magnesium. alpha-casein is the usual test substrate. In the absence of ATP, only oligopeptides shorter than five residues are hydrolyzed (such as succinyl-Leu-Tyr-|-NHMec, and Leu-Tyr-Leu-|-Tyr-Trp, in which cleavage of the -Tyr-|-Leu- and -Tyr-|-Trp bonds also occurs).. In terms of biological role, cleaves peptides in various proteins in a process that requires ATP hydrolysis. Has a chymotrypsin-like activity. Plays a major role in the degradation of misfolded proteins. This chain is ATP-dependent Clp protease proteolytic subunit, found in Actinobacillus succinogenes (strain ATCC 55618 / DSM 22257 / CCUG 43843 / 130Z).